Reading from the N-terminus, the 595-residue chain is Zinc finger protein 467 (595 aa).

Positions 1-67 are disordered; sequence MRETLEALSS…EEGAHTEQAE (67 aa). Lys97 is covalently cross-linked (Glycyl lysine isopeptide (Lys-Gly) (interchain with G-Cter in SUMO2)). C2H2-type zinc fingers lie at residues 160-182, 188-210, 216-238, 244-266, 272-294, and 300-322; these read YGCG…QRLH, CACP…QRSH, FPCS…LRTH, YPCA…QKTH, FPCT…QRIH, and YQCA…QRVH. Positions 313-350 are disordered; sequence QHLVRHQRVHQTAGPARPSPDSSASPHSTAPSPTPSFP. The span at 325–343 shows a compositional bias: low complexity; the sequence is AGPARPSPDSSASPHSTAP. 6 consecutive C2H2-type zinc fingers follow at residues 355–377, 431–453, 459–481, 487–509, 515–537, and 543–565; these read FACS…QCLH, FFCP…PRVH, FACT…SRAH, FACA…QAVH, HACA…QAIH, and FSCP…QLIH. Lys368 participates in a covalent cross-link: Glycyl lysine isopeptide (Lys-Gly) (interchain with G-Cter in SUMO2).

This sequence belongs to the krueppel C2H2-type zinc-finger protein family. As to quaternary structure, interacts with STAT3. Enhances STAT3 activity by keeping it in the nucleus.

It localises to the nucleus. Its function is as follows. Transcription factor that promotes adipocyte differentiation and suppresses osteoblast differentiation in the bone marrow. Enhances the osteoclast-supporting ability of stromal cells. Binds with STAT3 the consensus sequence 5'-CTTCTGGGAAGA-3' of the acute phase response element (APRE). Transactivates several promoters including FOS, OSM and PPARG. Recruits a histone deacetylase complex. In Homo sapiens (Human), this protein is Zinc finger protein 467 (ZNF467).